Here is a 387-residue protein sequence, read N- to C-terminus: Putative protein FAM157C (387 aa).

Disordered regions lie at residues M1–K21, T182–P226, and R329–G353.

Belongs to the FAM157 family.

This is Putative protein FAM157C (FAM157C) from Homo sapiens (Human).